The primary structure comprises 213 residues: MITIALPKGALLSDSIELFKRIGLDFSSFLDSKNRQLQIIDPTNTAQGLLVRATDVPVYVEYGQAQLGIVGYDLLLEKSPDVAHLADLNFGGCRMSVAVPKTSPYQTPAELPPNGKVASKFVNCAKTYFQQLDLPVEIIPLYGSVELGPITGMSEAIVDLVSTGRTLKENGLVEVETLFHSTARLIAHPLSYRLNLDNLNDLSEQIKNSVSKS.

Belongs to the ATP phosphoribosyltransferase family. Short subfamily. In terms of assembly, heteromultimer composed of HisG and HisZ subunits.

It is found in the cytoplasm. It carries out the reaction 1-(5-phospho-beta-D-ribosyl)-ATP + diphosphate = 5-phospho-alpha-D-ribose 1-diphosphate + ATP. It functions in the pathway amino-acid biosynthesis; L-histidine biosynthesis; L-histidine from 5-phospho-alpha-D-ribose 1-diphosphate: step 1/9. Its function is as follows. Catalyzes the condensation of ATP and 5-phosphoribose 1-diphosphate to form N'-(5'-phosphoribosyl)-ATP (PR-ATP). Has a crucial role in the pathway because the rate of histidine biosynthesis seems to be controlled primarily by regulation of HisG enzymatic activity. The chain is ATP phosphoribosyltransferase from Crocosphaera subtropica (strain ATCC 51142 / BH68) (Cyanothece sp. (strain ATCC 51142)).